We begin with the raw amino-acid sequence, 590 residues long: Peroxisomal targeting signal receptor (590 aa).

Residue cysteine 6 forms a Glycyl cysteine thioester (Cys-Gly) (interchain with G-Cter in ubiquitin) linkage. Positions 7–29 (SVGSNPLAQLNKHAQGQGSSLSN) are amphipathic helix 1 (AH1). Lysine 18 is covalently cross-linked (Glycyl lysine isopeptide (Lys-Gly) (interchain with G-Cter in ubiquitin)). The segment covering 18–30 (KHAQGQGSSLSNT) has biased composition (polar residues). A disordered region spans residues 18–45 (KHAQGQGSSLSNTHVRHSGGVSGSNVFR). The tract at residues 56–74 (RQQLNSFMSQPMRLGEDKM) is amphipathic helix 2 (AH2). Short sequence motifs (wxxxF/Y motif) lie at residues 108-112 (WTREF), 139-143 (WKFRY), and 178-182 (WNDKF). The interval 227 to 243 (FQEVWDSIQQDTEEMLS) is amphipathic helix 4 (AH4). 5 TPR repeats span residues 285–319 (NPNA…DPKH), 320–353 (VDAW…DPNN), 424–457 (PDIQ…NPND), 459–491 (LMWN…KPSF), and 493–525 (RARY…HDVE).

This sequence belongs to the peroxisomal targeting signal receptor family. As to quaternary structure, interacts (via WxxxF/Y and LVxEF motifs) with PEX14; promoting translocation through the PEX13-PEX14 docking complex. Post-translationally, monoubiquitinated at Cys-6 by PEX2 during PEX5 passage through the retrotranslocation channel: monoubiquitination acts as a signal for PEX5 extraction and is required for proper export from peroxisomes and recycling. When PEX5 recycling is compromised, polyubiquitinated at Lys-18 by PEX10 during its passage through the retrotranslocation channel, leading to its degradation.

It localises to the cytoplasm. The protein localises to the cytosol. Its subcellular location is the peroxisome matrix. Its function is as follows. Receptor that mediates peroxisomal import of proteins containing a C-terminal PTS1-type tripeptide peroxisomal targeting signal (SKL-type). Binds to cargo proteins containing a PTS1 peroxisomal targeting signal in the cytosol, and translocates them into the peroxisome matrix by passing through the PEX13-PEX14 docking complex along with cargo proteins. PEX5 receptor is then retrotranslocated into the cytosol, leading to release of bound cargo in the peroxisome matrix, and reset for a subsequent peroxisome import cycle. The protein is Peroxisomal targeting signal receptor (PEX5) of Candida glabrata (strain ATCC 2001 / BCRC 20586 / JCM 3761 / NBRC 0622 / NRRL Y-65 / CBS 138) (Yeast).